We begin with the raw amino-acid sequence, 282 residues long: HTH-type transcriptional activator RhaR (282 aa).

In terms of domain architecture, HTH araC/xylS-type spans 179 to 277 (DKLITALANS…GMTPSQWRHL (99 aa)). 2 consecutive DNA-binding regions (H-T-H motif) follow at residues 196 to 217 (DAFCQQEQCSERVLRQQFRAQT) and 244 to 267 (VSEISMQCGFEDSNYFSVVFTRET).

As to quaternary structure, binds DNA as a dimer.

The protein resides in the cytoplasm. Activates expression of the rhaSR operon in response to L-rhamnose. This Salmonella choleraesuis (strain SC-B67) protein is HTH-type transcriptional activator RhaR.